The sequence spans 1083 residues: Chitin synthase 2 (1083 aa).

Basic and acidic residues-rich tracts occupy residues 1 to 10 (MSSEREERTF) and 18 to 30 (DDVRENISNENQE). Disordered regions lie at residues 1 to 248 (MSSE…IADD) and 260 to 294 (DDDVFAPESDLSDARPHPVDRSSYMSSESQDTLNE). Residue Asn-23 is glycosylated (N-linked (GlcNAc...) asparagine). Composition is skewed to polar residues over residues 38–49 (SYASSMAESQTL) and 61–70 (AKLQNKNRTS). A glycan (N-linked (GlcNAc...) asparagine) is linked at Asn-67. 2 stretches are compositionally biased toward basic and acidic residues: residues 78–100 (LPRDLPEIPDGISDRRRVHKEQQ) and 117–128 (RLRDVNSHDKLP). Polar residues-rich tracts occupy residues 132–148 (SPRNLNYQPSVRSSRSG), 177–191 (RPWTPSSRVSGFTRS), and 282–292 (SYMSSESQDTL). The N-linked (GlcNAc...) asparagine glycan is linked to Asn-417. A run of 8 helical transmembrane segments spans residues 708–728 (WLNGAFFAAVYSLVHFKQIWF), 747–767 (FIQLMFTFFSLANFYLTFYFV), 785–805 (TVIFHILRYACVLLISTQFIL), 820–840 (ISMIIYSIIMVYTTFATFYII), 860–880 (NMIVSILSTIGMYFIMSILYL), 889–909 (SAQYFILLPSYICTLQVYAFC), 987–1007 (YLVLTWMIGNGILGMAVSEIY), and 1020–1040 (FLLWSVAALAVFRAIGSTTFA).

This sequence belongs to the chitin synthase family. Class II subfamily.

It is found in the cell membrane. The enzyme catalyses [(1-&gt;4)-N-acetyl-beta-D-glucosaminyl](n) + UDP-N-acetyl-alpha-D-glucosamine = [(1-&gt;4)-N-acetyl-beta-D-glucosaminyl](n+1) + UDP + H(+). Polymerizes chitin, a structural polymer of the cell wall and septum, by transferring the sugar moiety of UDP-GlcNAc to the non-reducing end of the growing chitin polymer. Plays a critical role in cell wall integrity and virulence. The chain is Chitin synthase 2 from Fusarium oxysporum f. sp. lycopersici (strain 4287 / CBS 123668 / FGSC 9935 / NRRL 34936) (Fusarium vascular wilt of tomato).